The primary structure comprises 232 residues: MSKLGKFFKGSRSSRARAAPSAQEALARLREIEEMMAKKQEYLENRIQRELALAKKHGSQNKRAALQALKRKKRFEKQLTQIDGTLSTIEFQREALENSHTNTEVLRNMGFAAKAMKAVHENMDLNKIDDLMQDITEQQDIAQEISEAFSQRVQFADGFDEDELLAELEELEQEELNKKMTSMELPNVPSSSLPAQPSRKAGVPSSVHRSRAASSRRAEEDDDFKQLAAWAT.

Disordered regions lie at residues 1-23 and 172-232; these read MSKL…PSAQ and EQEE…AWAT. The tract at residues 1–153 is intramolecular interaction with C-terminus; sequence MSKLGKFFKG…EISEAFSQRV (153 aa). The span at 11–23 shows a compositional bias: low complexity; sequence SRSSRARAAPSAQ. 2 coiled-coil regions span residues 21-50 and 125-182; these read SAQE…IQRE and LNKI…KMTS. The segment at 154-232 is intramolecular interaction with N-terminus; the sequence is QFADGFDEDE…DFKQLAAWAT (79 aa). At Ser210 the chain carries Phosphoserine; by AURKB.

This sequence belongs to the SNF7 family. In terms of assembly, probable core component of the endosomal sorting required for transport complex III (ESCRT-III). ESCRT-III components are thought to multimerize to form a flat lattice on the perimeter membrane of the endosome. Several assembly forms of ESCRT-III may exist that interact and act sequentially. Self-associates. Interacts with CHMP2A. Interacts with CHMP4A. Interacts with CHMP4B. Interacts with CHMP6. Interacts with VPS4A. Interacts with PDCD6IP; the interaction is direct. In terms of processing, phosphorylated at Ser-210 by AURKB during cytokinesis: together with ZFYVE19/ANCHR, phosphorylated CHMP4C retains abscission-competent VPS4 (VPS4A and/or VPS4B) at the midbody ring until abscission checkpoint signaling is terminated at late cytokinesis.

Its subcellular location is the cytoplasm. The protein localises to the cytosol. The protein resides in the late endosome membrane. It localises to the midbody. It is found in the midbody ring. Functionally, probable core component of the endosomal sorting required for transport complex III (ESCRT-III) which is involved in multivesicular bodies (MVBs) formation and sorting of endosomal cargo proteins into MVBs. MVBs contain intraluminal vesicles (ILVs) that are generated by invagination and scission from the limiting membrane of the endosome and mostly are delivered to lysosomes enabling degradation of membrane proteins, such as stimulated growth factor receptors, lysosomal enzymes and lipids. The MVB pathway appears to require the sequential function of ESCRT-O, -I,-II and -III complexes. ESCRT-III proteins mostly dissociate from the invaginating membrane before the ILV is released. The ESCRT machinery also functions in topologically equivalent membrane fission events, such as the terminal stages of cytokinesis. Key component of the cytokinesis checkpoint, a process required to delay abscission to prevent both premature resolution of intercellular chromosome bridges and accumulation of DNA damage: upon phosphorylation by AURKB, together with ZFYVE19/ANCHR, retains abscission-competent VPS4 (VPS4A and/or VPS4B) at the midbody ring until abscission checkpoint signaling is terminated at late cytokinesis. Deactivation of AURKB results in dephosphorylation of CHMP4C followed by its dissociation from ANCHR and VPS4 and subsequent abscission. ESCRT-III proteins are believed to mediate the necessary vesicle extrusion and/or membrane fission activities, possibly in conjunction with the AAA ATPase VPS4. CHMP4A/B/C are required for the exosomal release of SDCBP, CD63 and syndecan. The chain is Charged multivesicular body protein 4c (Chmp4c) from Rattus norvegicus (Rat).